The chain runs to 205 residues: Dephospho-CoA kinase (205 aa).

The DPCK domain occupies 4–203; it reads KIGITGGIGS…QKIHYLCSAK (200 aa). 12 to 17 is a binding site for ATP; it reads GSGKSV.

It belongs to the CoaE family.

The protein localises to the cytoplasm. It catalyses the reaction 3'-dephospho-CoA + ATP = ADP + CoA + H(+). The protein operates within cofactor biosynthesis; coenzyme A biosynthesis; CoA from (R)-pantothenate: step 5/5. Functionally, catalyzes the phosphorylation of the 3'-hydroxyl group of dephosphocoenzyme A to form coenzyme A. This Bacteroides fragilis (strain ATCC 25285 / DSM 2151 / CCUG 4856 / JCM 11019 / LMG 10263 / NCTC 9343 / Onslow / VPI 2553 / EN-2) protein is Dephospho-CoA kinase.